The primary structure comprises 296 residues: Probable endonuclease 4 (296 aa).

The Zn(2+) site is built by histidine 69, histidine 109, glutamate 160, aspartate 194, histidine 197, histidine 231, aspartate 244, histidine 246, and glutamate 276.

The protein belongs to the AP endonuclease 2 family. Zn(2+) serves as cofactor.

It catalyses the reaction Endonucleolytic cleavage to 5'-phosphooligonucleotide end-products.. Functionally, endonuclease IV plays a role in DNA repair. It cleaves phosphodiester bonds at apurinic or apyrimidinic (AP) sites, generating a 3'-hydroxyl group and a 5'-terminal sugar phosphate. The sequence is that of Probable endonuclease 4 from Sulfurovum sp. (strain NBC37-1).